The sequence spans 93 residues: UPF0358 protein LMHCC_1561 (93 aa).

It belongs to the UPF0358 family.

In Listeria monocytogenes serotype 4a (strain HCC23), this protein is UPF0358 protein LMHCC_1561.